The sequence spans 922 residues: GPI inositol-deacylase (922 aa).

Residues 1-11 are Cytoplasmic-facing; it reads MFLHSVNLWNL. A helical membrane pass occupies residues 12–32; it reads AFYVFMVFLATLGLWDVFFGF. Residues 33 to 597 lie on the Lumenal side of the membrane; that stretch reads EENKCSMSYM…GQVVRFHGGA (565 aa). Ser-174 is a catalytic residue. N-linked (GlcNAc...) asparagine glycans are attached at residues Asn-363, Asn-402, and Asn-558. Residues 598 to 618 form a helical membrane-spanning segment; sequence LPAYVVSSILLAYGGQLYSLL. Over 619-641 the chain is Cytoplasmic; that stretch reads STGYCLEYSTILDKEAKPYKVDP. The helical transmembrane segment at 642 to 662 threads the bilayer; it reads FVIMIKFLLGYKWFKELWDAV. The Lumenal segment spans residues 663–668; it reads LLPELD. Residues 669–689 form a helical membrane-spanning segment; the sequence is AIVLTSQSMCFPLVSLILFLF. Residues 690–694 are Cytoplasmic-facing; it reads GTCTA. Residues 695 to 715 traverse the membrane as a helical segment; sequence YWSGLLSSTSVQLLSSLWLAL. The Lumenal segment spans residues 716–733; it reads KRPAELPKDIKVMSPDLP. A helical membrane pass occupies residues 734–754; the sequence is VLTVVFLIVSWTTCGALAILL. Topologically, residues 755 to 817 are cytoplasmic; sequence SYLYYVFKVV…DAEDSLRMHS (63 aa). Positions 776–798 are disordered; that stretch reads NQPVNPKHSRRSEKKSNHHKDSA. The span at 782-793 shows a compositional bias: basic residues; sequence KHSRRSEKKSNH. Residues 818–838 traverse the membrane as a helical segment; it reads TVINLLTWVVLLSMPSLIYWL. The Lumenal segment spans residues 839 to 894; sequence KNLRYYFKLSPDPCKPLAFLLIPAIAILGNTHTVSVKSSKLLKTVSQFPLPLAVGV. The chain crosses the membrane as a helical span at residues 895–915; it reads IAFGSSHLYRVPCFVIIPLVF. At 916–922 the chain is on the cytoplasmic side; it reads HALCNFM.

The protein belongs to the GPI inositol-deacylase family.

It is found in the endoplasmic reticulum membrane. Its function is as follows. GPI inositol-deacylase that catalyzes the remove of the acyl chain linked to the 2-OH position of inositol ring from the GPI-anchored protein (GPI-AP) in the endoplasmic reticulum. Initiates the post-attachment remodeling phase of GPI-AP biogenesis and participates in endoplasmic reticulum (ER)-to-Golgi transport of GPI-anchored protein. The sequence is that of GPI inositol-deacylase from Mus musculus (Mouse).